Consider the following 350-residue polypeptide: Holliday junction branch migration complex subunit RuvB (350 aa).

The disordered stretch occupies residues 1–20 (MIEADRLITASPREREEQQD). A large ATPase domain (RuvB-L) region spans residues 4–184 (ADRLITASPR…FGIVQRLEFY (181 aa)). ATP is bound by residues Ile-23, Arg-24, Gly-65, Lys-68, Thr-69, Thr-70, 131–133 (EDF), Arg-174, Tyr-184, and Arg-221. Residue Thr-69 participates in Mg(2+) binding. The interval 185 to 255 (GIDDLATIVT…IADQALNLLD (71 aa)) is small ATPAse domain (RuvB-S). The segment at 258-350 (ERGFDHSDRR…SGDLFAVSDE (93 aa)) is head domain (RuvB-H). DNA-binding residues include Arg-294, Arg-313, and Arg-318.

Belongs to the RuvB family. In terms of assembly, homohexamer. Forms an RuvA(8)-RuvB(12)-Holliday junction (HJ) complex. HJ DNA is sandwiched between 2 RuvA tetramers; dsDNA enters through RuvA and exits via RuvB. An RuvB hexamer assembles on each DNA strand where it exits the tetramer. Each RuvB hexamer is contacted by two RuvA subunits (via domain III) on 2 adjacent RuvB subunits; this complex drives branch migration. In the full resolvosome a probable DNA-RuvA(4)-RuvB(12)-RuvC(2) complex forms which resolves the HJ.

The protein resides in the cytoplasm. It carries out the reaction ATP + H2O = ADP + phosphate + H(+). Functionally, the RuvA-RuvB-RuvC complex processes Holliday junction (HJ) DNA during genetic recombination and DNA repair, while the RuvA-RuvB complex plays an important role in the rescue of blocked DNA replication forks via replication fork reversal (RFR). RuvA specifically binds to HJ cruciform DNA, conferring on it an open structure. The RuvB hexamer acts as an ATP-dependent pump, pulling dsDNA into and through the RuvAB complex. RuvB forms 2 homohexamers on either side of HJ DNA bound by 1 or 2 RuvA tetramers; 4 subunits per hexamer contact DNA at a time. Coordinated motions by a converter formed by DNA-disengaged RuvB subunits stimulates ATP hydrolysis and nucleotide exchange. Immobilization of the converter enables RuvB to convert the ATP-contained energy into a lever motion, pulling 2 nucleotides of DNA out of the RuvA tetramer per ATP hydrolyzed, thus driving DNA branch migration. The RuvB motors rotate together with the DNA substrate, which together with the progressing nucleotide cycle form the mechanistic basis for DNA recombination by continuous HJ branch migration. Branch migration allows RuvC to scan DNA until it finds its consensus sequence, where it cleaves and resolves cruciform DNA. The chain is Holliday junction branch migration complex subunit RuvB from Ectopseudomonas mendocina (strain ymp) (Pseudomonas mendocina).